The primary structure comprises 116 residues: Putative UPF0320 protein YLL065W (116 aa).

Belongs to the UPF0320 family.

This is Putative UPF0320 protein YLL065W from Saccharomyces cerevisiae (strain ATCC 204508 / S288c) (Baker's yeast).